The primary structure comprises 513 residues: MLDIKGYLVLFFLWFISTILIRSIFKKPQRLRLPPGPPISIPLLGHAPYLRSLLHQALYKLSLRYGPLIHVMIGSKHVVVASSAETAKQILKTSEEAFCNRPLMIASESLTYGAADYFFIPYGTYWRFLKKLCMTELLSGKTLEHFVRIRESEVEAFLKRMMEISGNGNYEVVMRKELITHTNNIITRMIMGKKSNAENDEVARLRKVVREVGELLGAFNLGDVIGFMRPLDLQGFGKKNMETHHKVDAMMEKVLREHEEARAKEDADSDRKKDLFDILLNLIEADGADNKLTRESAKAFALDMFIAGTNGPASVLEWSLAELVRNPHVFKKAREEIESVVGKERLVKESDIPNLPYLQAVLKETLRLHPPTPIFAREAMRTCQVEGYDIPENSTILISTWAIGRDPNYWDDALEYKPERFLFSDDPGKSKIDVRGQYYQLLPFGSGRRSCPGASLALLVMQATLASLIQCFDWIVNDGKNHHVDMSEEGRVTVFLAKPLKCKPVPRFTPFAA.

A helical; Signal-anchor membrane pass occupies residues 1–21 (MLDIKGYLVLFFLWFISTILI). Cys451 contacts heme.

It belongs to the cytochrome P450 family. Heme serves as cofactor.

It is found in the membrane. The enzyme catalyses beta-amyrin + reduced [NADPH--hemoprotein reductase] + O2 = 24-hydroxy-beta-amyrin + oxidized [NADPH--hemoprotein reductase] + H2O + H(+). It carries out the reaction sophoradiol + reduced [NADPH--hemoprotein reductase] + O2 = soyasapogenol B + oxidized [NADPH--hemoprotein reductase] + H2O + H(+). Heme-containing cytochrome P450 involved in the biosynthesis of soyasaponins. Hydroxylates specifically the C-24 methyl group of the triterpenes beta-amyrin and sophoradiol. No activity with lupeol, butyrospermol, tirucalla-7,21-dien-3beta-ol, taraxasterol, psi-taraxasterol, bauerenol, alpha-amyrin and multiflorenol as substrates. The sequence is that of Beta-amyrin 24-hydroxylase (CYP93E1) from Glycine max (Soybean).